We begin with the raw amino-acid sequence, 324 residues long: Thiamine thiazole synthase (324 aa).

Residues cysteine 86, 107–108 (EA), glycine 115, and valine 180 contribute to the substrate site. Cysteine 213 carries the post-translational modification 2,3-didehydroalanine (Cys). Substrate is bound by residues aspartate 215, histidine 230, methionine 282, and 292–294 (RMG).

The protein belongs to the THI4 family. In terms of assembly, homooctamer. It depends on Fe cation as a cofactor. Post-translationally, during the catalytic reaction, a sulfide is transferred from Cys-213 to a reaction intermediate, generating a dehydroalanine residue.

It is found in the cytoplasm. The protein resides in the nucleus. The enzyme catalyses [ADP-thiazole synthase]-L-cysteine + glycine + NAD(+) = [ADP-thiazole synthase]-dehydroalanine + ADP-5-ethyl-4-methylthiazole-2-carboxylate + nicotinamide + 3 H2O + 2 H(+). In terms of biological role, involved in biosynthesis of the thiamine precursor thiazole. Catalyzes the conversion of NAD and glycine to adenosine diphosphate 5-(2-hydroxyethyl)-4-methylthiazole-2-carboxylic acid (ADT), an adenylated thiazole intermediate. The reaction includes an iron-dependent sulfide transfer from a conserved cysteine residue of the protein to a thiazole intermediate. The enzyme can only undergo a single turnover, which suggests it is a suicide enzyme. May have additional roles in adaptation to various stress conditions and in DNA damage tolerance. This Fusarium solani subsp. phaseoli (Nectria haematococca) protein is Thiamine thiazole synthase (sti35).